A 146-amino-acid chain; its full sequence is Catabolic 3-dehydroquinase (146 aa).

Catalysis depends on Tyr-24, which acts as the Proton acceptor. Asn-78, His-84, and Asp-91 together coordinate substrate. His-104 functions as the Proton donor in the catalytic mechanism. Residues 105 to 106 and Arg-115 contribute to the substrate site; that span reads IT.

It belongs to the type-II 3-dehydroquinase family. In terms of assembly, homododecamer. Adopts a ring-like structure, composed of an arrangement of two hexameric rings stacked on top of one another.

The enzyme catalyses 3-dehydroquinate = 3-dehydroshikimate + H2O. It functions in the pathway aromatic compound metabolism; 3,4-dihydroxybenzoate biosynthesis; 3,4-dihydroxybenzoate from 3-dehydroquinate: step 1/2. Its function is as follows. Is involved in the catabolism of quinate. Allows the utilization of quinate as carbon source via the beta-ketoadipate pathway. This Scheffersomyces stipitis (strain ATCC 58785 / CBS 6054 / NBRC 10063 / NRRL Y-11545) (Yeast) protein is Catabolic 3-dehydroquinase.